Here is a 292-residue protein sequence, read N- to C-terminus: NAD kinase (292 aa).

Asp-73 functions as the Proton acceptor in the catalytic mechanism. NAD(+) is bound by residues 73–74, 147–148, His-158, Arg-175, Asp-177, 188–193, and Gln-247; these read DG, NE, and TAYSLS.

Belongs to the NAD kinase family. A divalent metal cation is required as a cofactor.

It localises to the cytoplasm. The catalysed reaction is NAD(+) + ATP = ADP + NADP(+) + H(+). Functionally, involved in the regulation of the intracellular balance of NAD and NADP, and is a key enzyme in the biosynthesis of NADP. Catalyzes specifically the phosphorylation on 2'-hydroxyl of the adenosine moiety of NAD to yield NADP. This chain is NAD kinase, found in Edwardsiella ictaluri (strain 93-146).